A 306-amino-acid chain; its full sequence is Acetaldehyde dehydrogenase 2/3 (306 aa).

Catalysis depends on Cys-130, which acts as the Acyl-thioester intermediate. NAD(+) contacts are provided by residues 161–169 and Asn-272; that span reads SAGPGTRKN.

It belongs to the acetaldehyde dehydrogenase family.

The catalysed reaction is acetaldehyde + NAD(+) + CoA = acetyl-CoA + NADH + H(+). This Azoarcus sp. (strain BH72) protein is Acetaldehyde dehydrogenase 2/3 (mhpF).